A 331-amino-acid polypeptide reads, in one-letter code: Putative sigma L-dependent transcriptional regulator YplP (331 aa).

The Sigma-54 factor interaction domain maps to 12-213 (HLIGEHQTFL…LKNAADYMAA (202 aa)). An ATP-binding site is contributed by 95–104 (AVRGTLFLDD).

Its function is as follows. May play a role in cold adaptation. This is Putative sigma L-dependent transcriptional regulator YplP (yplP) from Bacillus subtilis (strain 168).